Consider the following 314-residue polypeptide: Large ribosomal subunit protein uL10 (314 aa).

Residues 281-314 (GSTQETPEEKKEEAKKEEKSPDESISEGLGALFQ) are disordered. Basic and acidic residues predominate over residues 287-302 (PEEKKEEAKKEEKSPD).

It belongs to the universal ribosomal protein uL10 family. Part of the 50S ribosomal subunit. Forms part of the ribosomal stalk which helps the ribosome interact with GTP-bound translation factors. Forms a heptameric L10(L12)2(L12)2(L12)2 complex, where L10 forms an elongated spine to which the L12 dimers bind in a sequential fashion.

Its function is as follows. Forms part of the ribosomal stalk, playing a central role in the interaction of the ribosome with GTP-bound translation factors. This is Large ribosomal subunit protein uL10 from Thermoplasma acidophilum (strain ATCC 25905 / DSM 1728 / JCM 9062 / NBRC 15155 / AMRC-C165).